The sequence spans 721 residues: BBSome complex member BBS2 (721 aa).

Positions 325–369 (RGNLMDTSAEQDLIRELSQKKQNLLLELRNYEENAKAELASPLNE) form a coiled coil.

Part of BBSome complex, that contains BBS1, BBS2, BBS4, BBS5, BBS7, BBS8/TTC8, BBS9 and BBIP10. Interacts (via C-terminus) with BBS7. Interacts (via coiled coil domain) with MKKS. Interacts with CCDC28B and ALDOB. Interacts with DLEC1. As to expression, widely expressed.

The protein localises to the cell projection. The protein resides in the cilium membrane. Its subcellular location is the cytoplasm. It localises to the cytoskeleton. It is found in the microtubule organizing center. The protein localises to the centrosome. The protein resides in the centriolar satellite. The BBSome complex is thought to function as a coat complex required for sorting of specific membrane proteins to the primary cilia. The BBSome complex is required for ciliogenesis but is dispensable for centriolar satellite function. This ciliogenic function is mediated in part by the Rab8 GDP/GTP exchange factor, which localizes to the basal body and contacts the BBSome. Rab8(GTP) enters the primary cilium and promotes extension of the ciliary membrane. Firstly the BBSome associates with the ciliary membrane and binds to RAB3IP/Rabin8, the guanosyl exchange factor (GEF) for Rab8 and then the Rab8-GTP localizes to the cilium and promotes docking and fusion of carrier vesicles to the base of the ciliary membrane. The BBSome complex, together with the LTZL1, controls SMO ciliary trafficking and contributes to the sonic hedgehog (SHH) pathway regulation. Required for proper BBSome complex assembly and its ciliary localization. This is BBSome complex member BBS2 from Homo sapiens (Human).